A 120-amino-acid polypeptide reads, in one-letter code: Large ribosomal subunit protein bL17 (120 aa).

It belongs to the bacterial ribosomal protein bL17 family. As to quaternary structure, part of the 50S ribosomal subunit. Contacts protein L32.

In Mycoplasmopsis pulmonis (strain UAB CTIP) (Mycoplasma pulmonis), this protein is Large ribosomal subunit protein bL17.